The primary structure comprises 865 residues: Alanine--tRNA ligase (865 aa).

Zn(2+) is bound by residues H554, H558, C656, and H660.

Belongs to the class-II aminoacyl-tRNA synthetase family. Zn(2+) is required as a cofactor.

The protein resides in the cytoplasm. It carries out the reaction tRNA(Ala) + L-alanine + ATP = L-alanyl-tRNA(Ala) + AMP + diphosphate. In terms of biological role, catalyzes the attachment of alanine to tRNA(Ala) in a two-step reaction: alanine is first activated by ATP to form Ala-AMP and then transferred to the acceptor end of tRNA(Ala). Also edits incorrectly charged Ser-tRNA(Ala) and Gly-tRNA(Ala) via its editing domain. The protein is Alanine--tRNA ligase of Francisella philomiragia subsp. philomiragia (strain ATCC 25017 / CCUG 19701 / FSC 153 / O#319-036).